The chain runs to 34 residues: Somatostatin (34 aa).

The segment at 1–20 (AVERPRQDGQVHEPPGRERK) is disordered. Residues cysteine 23 and cysteine 34 are joined by a disulfide bond.

This sequence belongs to the somatostatin family.

It localises to the secreted. Somatostatin inhibits the release of somatotropin. This is Somatostatin (sst) from Myxine glutinosa (Atlantic hagfish).